We begin with the raw amino-acid sequence, 1229 residues long: Phosphorylase b kinase regulatory subunit alpha, liver isoform (1229 aa).

Acidic residues predominate over residues 625 to 646 (DSLLEDDEEQEEEEEDKFEDDY). The disordered stretch occupies residues 625 to 648 (DSLLEDDEEQEEEEEDKFEDDYNN). Residues 825 to 855 (LEELYIQAGACKEWGLIRYISGILRKRVEVL) form a calmodulin-binding region. A disordered region spans residues 1024 to 1050 (EIKQRCSSPSTPSGILSPVGPGPADGQ). Polar residues predominate over residues 1028-1037 (RCSSPSTPSG). Positions 1052–1092 (HWVERQGQWLRRRRLDGAINRVPVGFYQKVWKILQKCHGLS) are calmodulin-binding. A lipid anchor (S-farnesyl cysteine) is attached at cysteine 1226.

The protein belongs to the phosphorylase b kinase regulatory chain family. As to quaternary structure, polymer of 16 chains, four each of alpha, beta, gamma, and delta. Alpha and beta are regulatory chains, gamma is the catalytic chain, and delta is calmodulin. Although the final Cys may be farnesylated, the terminal tripeptide is probably not removed, and the C-terminus is not methylated.

The protein localises to the cell membrane. Its pathway is glycan biosynthesis; glycogen metabolism. By phosphorylation of various serine residues and by calcium. Phosphorylase b kinase catalyzes the phosphorylation of serine in certain substrates, including troponin I. The alpha chain may bind calmodulin. In Takifugu rubripes (Japanese pufferfish), this protein is Phosphorylase b kinase regulatory subunit alpha, liver isoform (phka2).